Consider the following 242-residue polypeptide: Pyridoxine 5'-phosphate synthase (242 aa).

Asn-8 contacts 3-amino-2-oxopropyl phosphate. 10–11 is a binding site for 1-deoxy-D-xylulose 5-phosphate; it reads DH. Arg-19 serves as a coordination point for 3-amino-2-oxopropyl phosphate. The active-site Proton acceptor is His-44. Arg-46 and His-51 together coordinate 1-deoxy-D-xylulose 5-phosphate. The Proton acceptor role is filled by Glu-71. Thr-101 is a binding site for 1-deoxy-D-xylulose 5-phosphate. Residue His-193 is the Proton donor of the active site. 3-amino-2-oxopropyl phosphate is bound by residues Gly-194 and 215-216; that span reads GF.

It belongs to the PNP synthase family. As to quaternary structure, homooctamer; tetramer of dimers.

It is found in the cytoplasm. The enzyme catalyses 3-amino-2-oxopropyl phosphate + 1-deoxy-D-xylulose 5-phosphate = pyridoxine 5'-phosphate + phosphate + 2 H2O + H(+). The protein operates within cofactor biosynthesis; pyridoxine 5'-phosphate biosynthesis; pyridoxine 5'-phosphate from D-erythrose 4-phosphate: step 5/5. In terms of biological role, catalyzes the complicated ring closure reaction between the two acyclic compounds 1-deoxy-D-xylulose-5-phosphate (DXP) and 3-amino-2-oxopropyl phosphate (1-amino-acetone-3-phosphate or AAP) to form pyridoxine 5'-phosphate (PNP) and inorganic phosphate. The polypeptide is Pyridoxine 5'-phosphate synthase (Elusimicrobium minutum (strain Pei191)).